The sequence spans 576 residues: Keratin, type II cytoskeletal 5 (576 aa).

Residues 1–163 form a head region; it reads MSRQSSVSFR…DPTIQRVRTE (163 aa). Phosphoserine occurs at positions 5, 8, 16, and 21. T24 is modified (phosphothreonine; by CDK1). Phosphoserine is present on residues S26, S36, S46, S60, S67, S71, S74, and S78. T147 is modified (phosphothreonine; by CDK1). T162 carries the post-translational modification Phosphothreonine; by AURKB. Residues 164–199 are coil 1A; the sequence is EREQIKTLNNKFASFIDKVRFLEQQNKVLDTKWTLL. The IF rod domain maps to 164 to 477; the sequence is EREQIKTLNN…KLLEGEECRL (314 aa). The interval 200-218 is linker 1; it reads QEQGTKTIKQNLDPLFEQY. Residues 219-311 are coil 1B; the sequence is INNLRRQLDG…FFDAELSQMQ (93 aa). The tract at residues 312–334 is linker 12; sequence THVSDTSVVLSMDNNRSLDLDSI. A coil 2 region spans residues 335 to 473; it reads IAEVKAQYED…ATYRKLLEGE (139 aa). The tail stretch occupies residues 474–576; sequence ECRLSGEGVG…TSSSRRSFKS (103 aa). An Omega-N-methylarginine modification is found at R527. Positions 540–557 are enriched in gly residues; the sequence is GFSASSGQGGGFSSGGGS. Residues 540–576 are disordered; it reads GFSASSGQGGGFSSGGGSSSSVKFVSTTSSSRRSFKS. The span at 558-576 shows a compositional bias: low complexity; that stretch reads SSSVKFVSTTSSSRRSFKS.

Belongs to the intermediate filament family. In terms of assembly, heterodimer of a type I and a type II keratin. Heterodimer with type I keratin KRT25 leading to the formation of keratin intermediate filament (KIF) network. Forms a heterodimer (via 2B domains) with KRT14 (via 2B domains). Interacts with TCHP. Interacts with EPPK1. Interacts with AMELX. Interacts with PKP1 (via N-terminus) and PKP2. Post-translationally, phosphorylated by CDK1, AURKB and Rho-kinase, phosphorylation is regulated by the cell cycle. Thr-24 phosphorylation, mediated by CDK1, peaks during prometaphase or metaphase cells with phosphorylated filamentous structures evident throughout the cytoplasm during early mitosis. CDK1 phosphorylates Thr-24 in mitotic cells at the site of injury. In terms of processing, O-glycosylated. Expressed in the epidermis (at protein level) and testis (within pachytene spermatocytes).

It localises to the cytoplasm. Its function is as follows. Required for the formation of keratin intermediate filaments in the basal epidermis and maintenance of the skin barrier in response to mechanical stress. Regulates the recruitment of Langerhans cells to the epidermis, potentially by modulation of the abundance of macrophage chemotactic cytokines, macrophage inflammatory cytokines and CTNND1 localization in keratinocytes. This is Keratin, type II cytoskeletal 5 from Rattus norvegicus (Rat).